Here is a 288-residue protein sequence, read N- to C-terminus: Energy-coupling factor transporter ATP-binding protein EcfA2 (288 aa).

Residues 3-243 (IVFEAVSHIY…RAELEAIGLG (241 aa)) form the ABC transporter domain. Residue 40-47 (GPTGSGKS) participates in ATP binding.

This sequence belongs to the ABC transporter superfamily. Energy-coupling factor EcfA family. Forms a stable energy-coupling factor (ECF) transporter complex composed of 2 membrane-embedded substrate-binding proteins (S component), 2 ATP-binding proteins (A component) and 2 transmembrane proteins (T component).

It localises to the cell membrane. Its function is as follows. ATP-binding (A) component of a common energy-coupling factor (ECF) ABC-transporter complex. Unlike classic ABC transporters this ECF transporter provides the energy necessary to transport a number of different substrates. The protein is Energy-coupling factor transporter ATP-binding protein EcfA2 of Symbiobacterium thermophilum (strain DSM 24528 / JCM 14929 / IAM 14863 / T).